Here is a 502-residue protein sequence, read N- to C-terminus: ATP-dependent DNA helicase uvsW (502 aa).

The Helicase ATP-binding domain occupies 122–280 (VFEGLVNRRR…QYVGMFGEIF (159 aa)). An ATP-binding site is contributed by 135–142 (LPTSAGKS). The DEAH box signature appears at 232 to 235 (DECH). Residues 335 to 501 (WIAKLAIKLA…KFNYVMKTVN (167 aa)) form the Helicase C-terminal domain.

As to quaternary structure, probably interacts with UvsW.1. Interacts with gp32. Requires Mg(2+) as cofactor.

The enzyme catalyses Couples ATP hydrolysis with the unwinding of duplex DNA by translocating in the 3'-5' direction.. The catalysed reaction is ATP + H2O = ADP + phosphate + H(+). Unwinding activity is strongly stimulated by single-stranded binding protein gp32, the ssDNA annealing activity is partially inhibited by gp32 and strongly inhibited by ATP-gamma-S. Another study did not find gp32 stimulation of helicase activity. Holliday junction (HJ) branch migration is inhibited by ATP-gamma-S. In terms of biological role, plays important roles in recombination-dependent DNA repair and the reorganization of stalled replication forks during viral DNA synthesis. Active on in vivo-derived T4 DNA; viral DNA is highly modified by hydroxymethylation and glucosylation of cytosine residues. Helps process Holliday junction (HJ) intermediates to mature products by catalyzing branch migration. Probably able to catalyze replication fork regression. Unwinds HJ and Y-branched but not linear double-stranded (ds)DNA; unwinding requires ATP and Mg(2+). Unwinds dsDNA with a 3'-single-stranded (ss)DNA overhang, suggesting it is a 3'-5' helicase. Another study does not find this activity. Unwinds D- and R-loops. Also anneals ssDNA; ATP stimulates annealing. Has ssDNA and dsDNA-stimulated ATPase activity, also hydrolyzes GTP in the presence of DNA. This chain is ATP-dependent DNA helicase uvsW, found in Enterobacteria phage T4 (Bacteriophage T4).